We begin with the raw amino-acid sequence, 426 residues long: Serine--tRNA ligase (426 aa).

233–235 (TAE) provides a ligand contact to L-serine. 264-266 (RAE) contacts ATP. L-serine is bound at residue Glu-287. ATP is bound at residue 351-354 (EISS). An L-serine-binding site is contributed by Ser-387.

Belongs to the class-II aminoacyl-tRNA synthetase family. Type-1 seryl-tRNA synthetase subfamily. In terms of assembly, homodimer. The tRNA molecule binds across the dimer.

The protein resides in the cytoplasm. It carries out the reaction tRNA(Ser) + L-serine + ATP = L-seryl-tRNA(Ser) + AMP + diphosphate + H(+). The catalysed reaction is tRNA(Sec) + L-serine + ATP = L-seryl-tRNA(Sec) + AMP + diphosphate + H(+). It functions in the pathway aminoacyl-tRNA biosynthesis; selenocysteinyl-tRNA(Sec) biosynthesis; L-seryl-tRNA(Sec) from L-serine and tRNA(Sec): step 1/1. Functionally, catalyzes the attachment of serine to tRNA(Ser). Is also able to aminoacylate tRNA(Sec) with serine, to form the misacylated tRNA L-seryl-tRNA(Sec), which will be further converted into selenocysteinyl-tRNA(Sec). This Clostridium novyi (strain NT) protein is Serine--tRNA ligase.